The primary structure comprises 161 residues: Protein-export protein SecB (161 aa).

It belongs to the SecB family. Homotetramer, a dimer of dimers. One homotetramer interacts with 1 SecA dimer.

The protein localises to the cytoplasm. In terms of biological role, one of the proteins required for the normal export of preproteins out of the cell cytoplasm. It is a molecular chaperone that binds to a subset of precursor proteins, maintaining them in a translocation-competent state. It also specifically binds to its receptor SecA. The sequence is that of Protein-export protein SecB from Ectopseudomonas mendocina (strain ymp) (Pseudomonas mendocina).